A 194-amino-acid polypeptide reads, in one-letter code: Peptidyl-tRNA hydrolase (194 aa).

Tyr-17 is a tRNA binding site. His-22 serves as the catalytic Proton acceptor. Residues Phe-68, Asn-70, and Asn-116 each contribute to the tRNA site.

It belongs to the PTH family. As to quaternary structure, monomer.

It localises to the cytoplasm. The enzyme catalyses an N-acyl-L-alpha-aminoacyl-tRNA + H2O = an N-acyl-L-amino acid + a tRNA + H(+). Functionally, hydrolyzes ribosome-free peptidyl-tRNAs (with 1 or more amino acids incorporated), which drop off the ribosome during protein synthesis, or as a result of ribosome stalling. Catalyzes the release of premature peptidyl moieties from peptidyl-tRNA molecules trapped in stalled 50S ribosomal subunits, and thus maintains levels of free tRNAs and 50S ribosomes. The polypeptide is Peptidyl-tRNA hydrolase (Actinobacillus pleuropneumoniae serotype 7 (strain AP76)).